The following is a 912-amino-acid chain: Protein transport protein SEC24-2 (912 aa).

The segment covering 1 to 11 (MSNPSRPKKRV) has biased composition (basic residues). Disordered regions lie at residues 1–83 (MSNP…QQIS) and 102–129 (PNAY…PGRP). 3 stretches are compositionally biased toward polar residues: residues 33 to 45 (SGQT…SGSA), 53 to 74 (GQFT…MTPA), and 106 to 129 (YQPN…PGRP). Positions 226, 229, 248, and 251 each coordinate Zn(2+). Positions 226–251 (CRRCRGYLNPFVKILQVESKWRCNFC) are zinc finger-like.

Belongs to the SEC23/SEC24 family. SEC24 subfamily. In terms of assembly, the COPII coat is composed of at least 5 proteins: the SEC23/24 complex, the SEC13/31 complex, and the protein SAR1. Golgi apparatus membrane; Peripheral membrane protein; Cytoplasmic side.

The protein resides in the cytoplasm. Its subcellular location is the cytoplasmic vesicle. The protein localises to the COPII-coated vesicle membrane. It is found in the endoplasmic reticulum membrane. It localises to the golgi apparatus membrane. In terms of biological role, component of the coat protein complex II (COPII) which promotes the formation of transport vesicles from the endoplasmic reticulum (ER). The coat has two main functions, the physical deformation of the endoplasmic reticulum membrane into vesicles and the selection of cargo molecules. This is Protein transport protein SEC24-2 (SEC242) from Naumovozyma castellii (Yeast).